The following is a 181-amino-acid chain: MKTIEVDDELYSYIASHTKHIGESASDILRRMLKFSAASQPAAPVTKEVRVASPAIVEAKPVKTIKDKVRAMRELLLSDEYAEQKRAVNRFMLLLSTLYSLDAQAFAEATESLHGRTRVYFAADEQTLLKNGNQTKPKHVSGTPYWVITNTNTGRKCSMIEHIMLSMQFPAELIEKVCGTI.

Interaction with DNA regions lie at residues 87-88, 116-120, and 150-156; these read AV, RTRVY, and NTNTGRK.

The protein belongs to the SeqA family. In terms of assembly, homodimer. Polymerizes to form helical filaments.

The protein resides in the cytoplasm. Negative regulator of replication initiation, which contributes to regulation of DNA replication and ensures that replication initiation occurs exactly once per chromosome per cell cycle. Binds to pairs of hemimethylated GATC sequences in the oriC region, thus preventing assembly of replication proteins and re-initiation at newly replicated origins. Repression is relieved when the region becomes fully methylated. The sequence is that of Negative modulator of initiation of replication from Shigella dysenteriae serotype 1 (strain Sd197).